The following is a 292-amino-acid chain: uncharacterized protein (292 aa).

Disordered stretches follow at residues Ser29–Ser50 and Val166–Lys292. The residue at position 50 (Ser50) is a Phosphoserine. 2 stretches are compositionally biased toward polar residues: residues Asn176–Asn189 and Gly208–Ile217. Basic and acidic residues predominate over residues Tyr221–Lys239. 2 stretches are compositionally biased toward polar residues: residues Thr240 to Thr250 and Asp260 to Pro270.

In terms of processing, phosphorylated upon DNA damage.

This is an uncharacterized protein from Rattus norvegicus (Rat).